Here is a 511-residue protein sequence, read N- to C-terminus: Histidine ammonia-lyase (511 aa).

The 5-imidazolinone (Ala-Gly) cross-link spans 142–144; the sequence is ASG. Residue S143 is modified to 2,3-didehydroalanine (Ser).

It belongs to the PAL/histidase family. In terms of processing, contains an active site 4-methylidene-imidazol-5-one (MIO), which is formed autocatalytically by cyclization and dehydration of residues Ala-Ser-Gly.

It is found in the cytoplasm. It catalyses the reaction L-histidine = trans-urocanate + NH4(+). It functions in the pathway amino-acid degradation; L-histidine degradation into L-glutamate; N-formimidoyl-L-glutamate from L-histidine: step 1/3. This chain is Histidine ammonia-lyase, found in Brucella canis (strain ATCC 23365 / NCTC 10854 / RM-666).